Consider the following 159-residue polypeptide: 2-C-methyl-D-erythritol 2,4-cyclodiphosphate synthase (159 aa).

2 residues coordinate a divalent metal cation: Asp-8 and His-10. 4-CDP-2-C-methyl-D-erythritol 2-phosphate contacts are provided by residues 8–10 (DVH) and 34–35 (HS). Residue His-42 coordinates a divalent metal cation. Residues 56–58 (DIG), 61–65 (FPDTD), 100–106 (AQAPKML), 132–135 (TTTE), Phe-139, and Arg-142 contribute to the 4-CDP-2-C-methyl-D-erythritol 2-phosphate site.

This sequence belongs to the IspF family. As to quaternary structure, homotrimer. The cofactor is a divalent metal cation.

It carries out the reaction 4-CDP-2-C-methyl-D-erythritol 2-phosphate = 2-C-methyl-D-erythritol 2,4-cyclic diphosphate + CMP. Its pathway is isoprenoid biosynthesis; isopentenyl diphosphate biosynthesis via DXP pathway; isopentenyl diphosphate from 1-deoxy-D-xylulose 5-phosphate: step 4/6. Its function is as follows. Involved in the biosynthesis of isopentenyl diphosphate (IPP) and dimethylallyl diphosphate (DMAPP), two major building blocks of isoprenoid compounds. Catalyzes the conversion of 4-diphosphocytidyl-2-C-methyl-D-erythritol 2-phosphate (CDP-ME2P) to 2-C-methyl-D-erythritol 2,4-cyclodiphosphate (ME-CPP) with a corresponding release of cytidine 5-monophosphate (CMP). This chain is 2-C-methyl-D-erythritol 2,4-cyclodiphosphate synthase, found in Klebsiella pneumoniae (strain 342).